A 99-amino-acid chain; its full sequence is Aspartyl/glutamyl-tRNA(Asn/Gln) amidotransferase subunit C (99 aa).

It belongs to the GatC family. Heterotrimer of A, B and C subunits.

The enzyme catalyses L-glutamyl-tRNA(Gln) + L-glutamine + ATP + H2O = L-glutaminyl-tRNA(Gln) + L-glutamate + ADP + phosphate + H(+). It carries out the reaction L-aspartyl-tRNA(Asn) + L-glutamine + ATP + H2O = L-asparaginyl-tRNA(Asn) + L-glutamate + ADP + phosphate + 2 H(+). In terms of biological role, allows the formation of correctly charged Asn-tRNA(Asn) or Gln-tRNA(Gln) through the transamidation of misacylated Asp-tRNA(Asn) or Glu-tRNA(Gln) in organisms which lack either or both of asparaginyl-tRNA or glutaminyl-tRNA synthetases. The reaction takes place in the presence of glutamine and ATP through an activated phospho-Asp-tRNA(Asn) or phospho-Glu-tRNA(Gln). This Paraburkholderia phytofirmans (strain DSM 17436 / LMG 22146 / PsJN) (Burkholderia phytofirmans) protein is Aspartyl/glutamyl-tRNA(Asn/Gln) amidotransferase subunit C.